Reading from the N-terminus, the 187-residue chain is Ribosome maturation factor RimM (187 aa).

Residues 96–169 (EDEFFYADLE…KLVIDPTAAG (74 aa)) form the PRC barrel domain.

This sequence belongs to the RimM family. In terms of assembly, binds ribosomal protein uS19.

It localises to the cytoplasm. An accessory protein needed during the final step in the assembly of 30S ribosomal subunit, possibly for assembly of the head region. Essential for efficient processing of 16S rRNA. May be needed both before and after RbfA during the maturation of 16S rRNA. It has affinity for free ribosomal 30S subunits but not for 70S ribosomes. This Sinorhizobium medicae (strain WSM419) (Ensifer medicae) protein is Ribosome maturation factor RimM.